We begin with the raw amino-acid sequence, 1157 residues long: Voltage-dependent calcium channel subunit alpha-2/delta-2 (1157 aa).

A signal peptide spans 1–18 (MAVPARTCGASWPGPVRT). The disordered stretch occupies residues 1–37 (MAVPARTCGASWPGPVRTARPWPGRGPRPCPDPRGPA). Over 19 to 1119 (ARPWPGRGPR…TEDTSDCGRG (1101 aa)) the chain is Extracellular. Residues 24–34 (GRGPRPCPDPR) show a composition bias toward pro residues. N-linked (GlcNAc...) asparagine glycosylation occurs at N205. Positions 294–472 (DMVIIVDVSG…INTQEYLDVL (179 aa)) constitute a VWFA domain. Residues D300, S302, and S304 each contribute to the a divalent metal cation site. An MIDAS-like motif motif is present at residues 300-304 (DVSGS). N389, N421, N510, N543, N627, and N864 each carry an N-linked (GlcNAc...) asparagine glycan. An intrachain disulfide couples C446 to C1104. Residues 488–577 (WTNVYEDALG…KPQITNFREP (90 aa)) form the Cache domain. The helical transmembrane segment at 1120–1140 (ASFPPSLGVLVSLQLLLLLGL) threads the bilayer. Topologically, residues 1141–1157 (PPRPQPQIHSFTPSRRL) are cytoplasmic.

This sequence belongs to the calcium channel subunit alpha-2/delta family. In terms of assembly, dimer formed of alpha-2-2 and delta-2 chains; disulfide-linked. Voltage-dependent calcium channels are multisubunit complexes, consisting of alpha-1 (CACNA1), alpha-2 (CACNA2D), beta (CACNB) and delta (CACNA2D) subunits in a 1:1:1:1 ratio. In terms of processing, N-glycosylated. Post-translationally, may be proteolytically processed into subunits alpha-2-2 and delta-2 that are disulfide-linked. It is however unclear whether such cleavage really takes place in vivo and has a functional role. As to expression, in heart, it is highly expressed in atrium and at lower level in ventricle.

The protein localises to the membrane. Its function is as follows. The alpha-2/delta subunit of voltage-dependent calcium channels regulates calcium current density and activation/inactivation kinetics of the calcium channel. Acts as a regulatory subunit for P/Q-type calcium channel (CACNA1A), N-type (CACNA1B), L-type (CACNA1C OR CACNA1D) and possibly T-type (CACNA1G). Overexpression induces apoptosis. This chain is Voltage-dependent calcium channel subunit alpha-2/delta-2 (Cacna2d2), found in Rattus norvegicus (Rat).